The sequence spans 97 residues: Co-chaperonin GroES (97 aa).

Belongs to the GroES chaperonin family. In terms of assembly, heptamer of 7 subunits arranged in a ring. Interacts with the chaperonin GroEL.

It localises to the cytoplasm. In terms of biological role, together with the chaperonin GroEL, plays an essential role in assisting protein folding. The GroEL-GroES system forms a nano-cage that allows encapsulation of the non-native substrate proteins and provides a physical environment optimized to promote and accelerate protein folding. GroES binds to the apical surface of the GroEL ring, thereby capping the opening of the GroEL channel. This Aeromonas hydrophila subsp. hydrophila (strain ATCC 7966 / DSM 30187 / BCRC 13018 / CCUG 14551 / JCM 1027 / KCTC 2358 / NCIMB 9240 / NCTC 8049) protein is Co-chaperonin GroES.